The primary structure comprises 417 residues: Type II methyltransferase M.KpnI (417 aa).

This sequence belongs to the N(4)/N(6)-methyltransferase family.

The enzyme catalyses a 2'-deoxyadenosine in DNA + S-adenosyl-L-methionine = an N(6)-methyl-2'-deoxyadenosine in DNA + S-adenosyl-L-homocysteine + H(+). A beta subtype methylase, recognizes the double-stranded sequence 5'-GGTACC-3', methylates A-4 on both strands, and protects the DNA from cleavage by the KpnI endonuclease. This chain is Type II methyltransferase M.KpnI, found in Klebsiella pneumoniae.